The following is a 436-amino-acid chain: MSVTTQEKDLSYKVKDLSQAEWGRQEIILAEKEMPGLMALRQEYKGKKPLAGARIAGSLHMTIQTAVLIETLTELGAEVRWSSCNIFSTQDHAAAAIAKAGIPVFAWKGETEEEYWWCIEQTIFFGDKGPNMILDDGGDLTAYIHEKYPKLLSEIRGISEETTTGVKSLYKLLKKGELKVPAFNVNDSVTKSKFDNLYGCRESLADGIKRATDVMLAGKVALVCGFGDVGKGSAASLRNFGARVIVTEIDPICALQASMEGYQVLRVEDIIEQVDIVVTATGNDDIITLEHMKAMKDGAILCNIGHFDTEIQMSRLNNEKGVTKKEIKPQVDKYTFPDGKSIIVLAEGRLVNLGCATGHPSFVMSCSFTNQVLAQIELYNNKYELGVYTLPKHLDEKVAALHLEQLGVRLTKLNQKQADYLGVPINGPFKPDHYRY.

Residues Thr62, Asp136, and Glu161 each contribute to the substrate site. 162–164 is an NAD(+) binding site; sequence TTT. 2 residues coordinate substrate: Lys191 and Asp195. Residues Asn196, 225–230, Glu248, Asn283, 304–306, and Asn352 each bind NAD(+); these read GFGDVG and IGH.

Belongs to the adenosylhomocysteinase family. NAD(+) is required as a cofactor.

It localises to the cytoplasm. It carries out the reaction S-adenosyl-L-homocysteine + H2O = L-homocysteine + adenosine. The protein operates within amino-acid biosynthesis; L-homocysteine biosynthesis; L-homocysteine from S-adenosyl-L-homocysteine: step 1/1. May play a key role in the regulation of the intracellular concentration of adenosylhomocysteine. The protein is Adenosylhomocysteinase of Leptospira interrogans serogroup Icterohaemorrhagiae serovar copenhageni (strain Fiocruz L1-130).